Consider the following 197-residue polypeptide: 22.7 kDa class IV heat shock protein (197 aa).

An N-terminal signal peptide occupies residues 1-28 (MSLKPLNMLLVPFLLLILAADFPLKAKA). The region spanning 68–184 (PSITLSHARV…GPRMVSIVEE (117 aa)) is the sHSP domain. Residues 194-197 (DELK) carry the Prevents secretion from ER motif.

Belongs to the small heat shock protein (HSP20) family. As to quaternary structure, forms oligomeric structures.

It is found in the endoplasmic reticulum lumen. The chain is 22.7 kDa class IV heat shock protein (HSP22.7) from Pisum sativum (Garden pea).